A 149-amino-acid polypeptide reads, in one-letter code: 3-dehydroquinate dehydratase (149 aa).

Tyrosine 25 acts as the Proton acceptor in catalysis. Substrate is bound by residues asparagine 76, histidine 82, and aspartate 89. The active-site Proton donor is histidine 102. Substrate-binding positions include 103–104 and arginine 113; that span reads LS.

Belongs to the type-II 3-dehydroquinase family. As to quaternary structure, homododecamer.

It carries out the reaction 3-dehydroquinate = 3-dehydroshikimate + H2O. The protein operates within metabolic intermediate biosynthesis; chorismate biosynthesis; chorismate from D-erythrose 4-phosphate and phosphoenolpyruvate: step 3/7. Functionally, catalyzes a trans-dehydration via an enolate intermediate. The polypeptide is 3-dehydroquinate dehydratase (Acaryochloris marina (strain MBIC 11017)).